Here is a 5005-residue protein sequence, read N- to C-terminus: Bridge-like lipid transfer protein family member 1 (5005 aa).

Residues 26–46 traverse the membrane as a helical segment; the sequence is NVVWLLVATILSCGWIIYLTY. Disordered stretches follow at residues 691-721, 1218-1257, and 1269-1310; these read LRPS…LPPD, LSLQ…SSVA, and GTKR…LKRQ. Composition is skewed to low complexity over residues 700-711 and 1226-1240; these read RVVSSPSTSSRP and SHSS…SSSS. The segment covering 1248–1257 has biased composition (basic and acidic residues); the sequence is GEKESPSSVA. Polar residues predominate over residues 1278-1303; it reads SIPTEISGNSPVSPNTQDKSVGQSPL. 3 positions are modified to phosphoserine: Ser-1301, Ser-1305, and Ser-1323. At Thr-1325 the chain carries Phosphothreonine. Disordered stretches follow at residues 1343–1376, 1400–1427, 1521–1548, and 1676–1704; these read SDVS…SNSF, EFEP…QQID, TNKR…SSSF, and FSEN…QGQA. A phosphoserine mark is found at Ser-1355 and Ser-1406. A compositionally biased stretch (basic residues) spans 1521 to 1530; that stretch reads TNKRTSKSSL. Over residues 1691–1704 the composition is skewed to polar residues; that stretch reads TEQSTIGTTNQGQA. A phosphoserine mark is found at Ser-1805 and Ser-1808. 3 disordered regions span residues 1924-1991, 2401-2420, and 2598-2677; these read DTER…PLMP, SDQN…QDDV, and TAGS…KDVV. Polar residues-rich tracts occupy residues 1931–1948, 1959–1971, 2401–2418, and 2598–2608; these read LTSN…YNTD, TSPS…NSVS, SDQN…TSQD, and TAGSASPTPTF. A phosphoserine mark is found at Ser-2601 and Ser-2603. The span at 2619 to 2638 shows a compositional bias: low complexity; the sequence is SDFSRSSRGSLNGGNRVNNA. Positions 2643–2665 are enriched in basic and acidic residues; sequence TNNENNKKESRNKNSLGRSERRT. Ser-2755 carries the post-translational modification Phosphoserine. The interval 2928-2967 is disordered; that stretch reads RQPSTAPQPVKEDIATPLPSEKTPTSVNQTPVETNEFPQL. The segment covering 2949–2964 has biased composition (polar residues); the sequence is KTPTSVNQTPVETNEF. Phosphoserine is present on Ser-3562. The segment covering 3612-3622 has biased composition (polar residues); sequence PSYSRSKSISA. 6 disordered regions span residues 3612-3661, 3686-3744, 3821-3843, 3914-3954, 4088-4146, and 4325-4394; these read PSYS…VTFN, SSNS…ERFY, RRSY…KKFQ, YGMK…KGKG, GTTY…SSSS, and QSAS…KAAS. A Phosphoserine modification is found at Ser-3653. The segment covering 3686–3700 has biased composition (polar residues); that stretch reads SSNSEGSCSVFSSPK. Residues 3727–3736 show a composition bias toward acidic residues; sequence EDSEKDEKDE. Basic and acidic residues predominate over residues 3821 to 3837; it reads RRSYDRSSRSLDQDSPS. Composition is skewed to polar residues over residues 3931 to 3940 and 4098 to 4113; these read TVQSKTNTLL and PGGN…SASK. Residues 4122–4146 show a composition bias toward low complexity; that stretch reads LGSPLGRSRHSSSQSDLTSSSSSSS. A Phosphoserine modification is found at Ser-4124. The span at 4325–4358 shows a compositional bias: polar residues; that stretch reads QSASFTHMPQSPNVFNEHMTNSTMSPGTVGQSLK. Positions 4359–4372 are enriched in low complexity; sequence SPASIRSRSVSDSS. A compositionally biased stretch (polar residues) spans 4381–4394; that stretch reads KTSTPFNKSNKAAS.

As to expression, highly expressed in testis and ovary. Weakly or not expressed in other tissues.

The protein localises to the cell membrane. It localises to the endoplasmic reticulum membrane. It is found in the mitochondrion membrane. Tube-forming lipid transport protein which provides phosphatidylethanolamine for glycosylphosphatidylinositol (GPI) anchor synthesis in the endoplasmic reticulum. Plays a role in endosomal trafficking and endosome recycling. Also involved in the actin cytoskeleton and cilia structural dynamics. Acts as a regulator of phagocytosis. This Homo sapiens (Human) protein is Bridge-like lipid transfer protein family member 1.